A 463-amino-acid chain; its full sequence is Lariat debranching enzyme (463 aa).

The a divalent metal cation site is built by Cys-8, His-10, Asp-33, and Asn-78. Residues 118-148 (SGIYSAMDYKKGRYEGLPYNYKMLKSIYHTR) form a lariat recognition loop region. Residues His-168, His-220, and His-222 each coordinate a divalent metal cation. A disordered region spans residues 250-324 (SGFSMKGLNE…QVTKFLALDK (75 aa)). The span at 256–267 (GLNEPSQERLPV) shows a compositional bias: polar residues. Composition is skewed to basic and acidic residues over residues 276-289 (DEEGSNNEQEEKQD) and 299-323 (CRKESCKKEPSLSSSDQVTKFLALD).

This sequence belongs to the lariat debranching enzyme family. Fe(2+) is required as a cofactor. It depends on Zn(2+) as a cofactor. Mn(2+) serves as cofactor.

Its subcellular location is the nucleus. The protein localises to the cytoplasm. With respect to regulation, active in presence of diverse metals including Fe(2+), Zn(2+) and Mn(2+). Binds two metal cations in two adjacent alpha and beta metal-binding pockets. In terms of biological role, cleaves the 2'-5' phosphodiester linkage at the branch point of lariat intron pre-mRNAs after splicing and converts them into linear molecules that are subsequently degraded, thereby facilitating ribonucleotide turnover. The sequence is that of Lariat debranching enzyme (dbr1) from Schizosaccharomyces pombe (strain 972 / ATCC 24843) (Fission yeast).